The following is a 325-amino-acid chain: tRNA-dihydrouridine(16) synthase (325 aa).

FMN is bound by residues 12 to 14 (PMQ) and Gln-73. The active-site Proton donor is Cys-103. FMN-binding positions include Lys-144, 205–207 (NGE), and 229–230 (GR).

This sequence belongs to the Dus family. DusC subfamily. It depends on FMN as a cofactor.

It carries out the reaction 5,6-dihydrouridine(16) in tRNA + NADP(+) = uridine(16) in tRNA + NADPH + H(+). The catalysed reaction is 5,6-dihydrouridine(16) in tRNA + NAD(+) = uridine(16) in tRNA + NADH + H(+). Catalyzes the synthesis of 5,6-dihydrouridine (D), a modified base found in the D-loop of most tRNAs, via the reduction of the C5-C6 double bond in target uridines. Specifically modifies U16 in tRNAs. This is tRNA-dihydrouridine(16) synthase from Haemophilus ducreyi (strain 35000HP / ATCC 700724).